A 405-amino-acid chain; its full sequence is Multidrug resistance protein MdtA (405 aa).

An N-terminal signal peptide occupies residues 1–22 (MKTPRRFPLIALTVAAVLTAAA). A compositionally biased stretch (polar residues) spans 35-52 (VQNRQGTEQQRASNSQGS). Residues 35 to 62 (VQNRQGTEQQRASNSQGSAKRAGNAPPV) are disordered.

This sequence belongs to the membrane fusion protein (MFP) (TC 8.A.1) family. As to quaternary structure, part of a tripartite efflux system composed of MdtA, MdtB and MdtC.

The protein resides in the cell inner membrane. In Erwinia amylovora (strain ATCC 49946 / CCPPB 0273 / Ea273 / 27-3), this protein is Multidrug resistance protein MdtA.